Consider the following 489-residue polypeptide: MSIPGFGSAEKVNHTASSVTLTIPQSYEWRIEVPFNRILKFKVLTGIVEINGTELANNTEIQLSGTKTYLYSPVTDAVIEYVLVENKDDLSLVSASDEGFVEYLSDESNMDSILNLHMYLESKRQYTKDYNFSSSIDQQQSGPKVLIIGSKYSGKTTVSKILSAYANKMNNTPVLVNLQPRDGVFALPGSLTATPISDSFDVESCNGYGLTTTSGTLVHNPKQPIVKNFGMADFNDNVDFYKLLIEKLGIAVLSRLDQDLNIKNSGVIIDTPALTSKNFDIVESMVSNFLIDNIIVIGNERLAIELTKKFAYKSTQLNIIKLNKSSGCIEVEDRFIRLQQEQTIKEYFNGNFKTRLSPFKTDIELSGLKIYKNVLTKDLLSQMAFLPGGDDFEKDETNPEEDPEKKQLEKYYQAIEDPNSSNLENSIVAITHLPNNDKKLGKDLLNTSVLGYIHVSKFDDQKKRLKVLFPFPGVFPKNVLISTNIGYNE.

Residues E28 and 152–157 (YSGKTT) each bind ATP.

This sequence belongs to the Clp1 family. Clp1 subfamily. In terms of assembly, component of a pre-mRNA cleavage factor complex. Interacts directly with PCF11.

The protein resides in the nucleus. In terms of biological role, required for endonucleolytic cleavage during polyadenylation-dependent pre-mRNA 3'-end formation. The polypeptide is mRNA cleavage and polyadenylation factor CLP1 (Candida albicans (strain SC5314 / ATCC MYA-2876) (Yeast)).